The chain runs to 551 residues: MASCNPTRKKSSASSLSMWRTILMALTTLPLSVLSQELVPANSTTSSTAPSITSLSAVESFTSSTDATSSASLSTPSIASVSFTSFPQSSSLLTLSSTLSSELSSSSMQVSSSSTSSSSSEVTSSSSSSSISPSSSSSTIISSSSSLPTFTVASTSSTVASSTLSTSSSLVISTSSSTFTFSSESSSSLISSSISTSVSTSSVYVPSSSTSSPPSSSSELTSSSYSSSSSSSTLFSYSSSFSSSSSSSSSSSSSSSSSSSSSSSYFTLSTSSSSSIYSSSSYPSFSSSSSSNPTSSITSTSASSSITPASEYSNLAKTITSIIEGQTILSNYYTTITYSPTASASSGKNSHHSGLSKKNRNIIIGCVVGIGAPLILILLILIYMFCVQPKKTDFIDSDGKIVTAYRSNIFTKIWYFLLGKKIGETERFSSDSPIGSNNIQNFGDIDPEDILNNDNPYTPKHTNVEGYDDDDDDDANDENLSSNFHNRGIDDQYSPTKSASYSMSNSNSQDYNDADEVMHDENIHRVYDDSEASIDENYYTKPNNGLNITNY.

A signal peptide spans 1 to 35; that stretch reads MASCNPTRKKSSASSLSMWRTILMALTTLPLSVLS. At 36–361 the chain is on the extracellular side; it reads QELVPANSTT…HSGLSKKNRN (326 aa). Disordered stretches follow at residues 108-143, 206-227, and 243-263; these read MQVS…IISS, PSSS…SYSS, and SSSS…SSSS. The chain crosses the membrane as a helical span at residues 362–382; sequence IIIGCVVGIGAPLILILLILI. The Cytoplasmic segment spans residues 383-551; the sequence is YMFCVQPKKT…PNNGLNITNY (169 aa). Residues 429–513 are disordered; that stretch reads SSDSPIGSNN…SNSNSQDYND (85 aa). Positions 430–441 are enriched in polar residues; that stretch reads SDSPIGSNNIQN. Positions 466–477 are enriched in acidic residues; the sequence is GYDDDDDDDAND. Residues Ser481 and Ser482 each carry the phosphoserine modification. Residues 498–508 show a composition bias toward low complexity; that stretch reads SASYSMSNSNS.

Belongs to the MID2 like cell wall stress sensor family.

It is found in the membrane. Functionally, involved in cell integrity signaling during vegetative growth at elevated temperature. Acts positively on the PKC1-MAPK pathway. Cell membrane sensor of oxidative stress in the cell integrity pathway upstream of PKC1. Required to transmit the oxidative signal to SLT2 and to restore the correct actin organization following oxidative stress. Multicopy suppressor of 1,3-beta-glucan synthase (GS) mutation. Also suppresses RGD1 null mutations. In Saccharomyces cerevisiae (strain ATCC 204508 / S288c) (Baker's yeast), this protein is Protein MTL1 (MTL1).